A 227-amino-acid chain; its full sequence is Probable GTP-binding protein EngB (227 aa).

The EngB-type G domain maps to 30–219 (KKPQIIVVGR…MVKINKNVNE (190 aa)). Residues 38–45 (GRSNVGKS), 63–67 (GVTLK), 80–83 (DLPG), 160–163 (NKMD), and 197–199 (IGI) each bind GTP. Serine 45 and threonine 65 together coordinate Mg(2+).

It belongs to the TRAFAC class TrmE-Era-EngA-EngB-Septin-like GTPase superfamily. EngB GTPase family. Requires Mg(2+) as cofactor.

Necessary for normal cell division and for the maintenance of normal septation. The protein is Probable GTP-binding protein EngB of Methanococcus aeolicus (strain ATCC BAA-1280 / DSM 17508 / OCM 812 / Nankai-3).